The chain runs to 182 residues: MGQESKPLIRSTTVLGVIRDGKAALGSDGQMTLGNTVLKHSTRKIRSLYHGRIITGFAGATADAVTLLDRFEEKLDAYGGKLERAAVELARDWRTDKYLRRLEAMLAVVSQDKALIISGTGDVIEPEDSIVAIGSGSMYALAAARSLLKHTPLSAREIVSESLKIAADICIYTNDHIVIEEL.

T12 is a catalytic residue. The Na(+) site is built by A167, C170, and T173.

The protein belongs to the peptidase T1B family. HslV subfamily. A double ring-shaped homohexamer of HslV is capped on each side by a ring-shaped HslU homohexamer. The assembly of the HslU/HslV complex is dependent on binding of ATP.

Its subcellular location is the cytoplasm. The enzyme catalyses ATP-dependent cleavage of peptide bonds with broad specificity.. With respect to regulation, allosterically activated by HslU binding. Its function is as follows. Protease subunit of a proteasome-like degradation complex believed to be a general protein degrading machinery. The protein is ATP-dependent protease subunit HslV of Chlorobium limicola (strain DSM 245 / NBRC 103803 / 6330).